The following is a 149-amino-acid chain: Large ribosomal subunit protein uL15 (149 aa).

A disordered region spans residues 1–64 (MVELHDLQPH…GQTPLYMRIP (64 aa)). The span at 31–40 (TAGRGHKGQK) shows a compositional bias: basic residues.

The protein belongs to the universal ribosomal protein uL15 family. As to quaternary structure, part of the 50S ribosomal subunit.

In terms of biological role, binds to the 23S rRNA. The polypeptide is Large ribosomal subunit protein uL15 (Aquifex aeolicus (strain VF5)).